The following is a 230-amino-acid chain: Ribosomal RNA large subunit methyltransferase E (230 aa).

Positions 1–13 (MSGSGGKGGGRGG) are enriched in gly residues. A disordered region spans residues 1-22 (MSGSGGKGGGRGGLHVRVKTAK). S-adenosyl-L-methionine contacts are provided by glycine 81, tryptophan 83, aspartate 100, aspartate 116, and aspartate 140. The active-site Proton acceptor is lysine 180.

The protein belongs to the class I-like SAM-binding methyltransferase superfamily. RNA methyltransferase RlmE family.

The protein localises to the cytoplasm. It catalyses the reaction uridine(2552) in 23S rRNA + S-adenosyl-L-methionine = 2'-O-methyluridine(2552) in 23S rRNA + S-adenosyl-L-homocysteine + H(+). Its function is as follows. Specifically methylates the uridine in position 2552 of 23S rRNA at the 2'-O position of the ribose in the fully assembled 50S ribosomal subunit. The chain is Ribosomal RNA large subunit methyltransferase E from Sphingopyxis alaskensis (strain DSM 13593 / LMG 18877 / RB2256) (Sphingomonas alaskensis).